A 71-amino-acid chain; its full sequence is Small ribosomal subunit protein bS21 (71 aa).

The protein belongs to the bacterial ribosomal protein bS21 family.

This is Small ribosomal subunit protein bS21 from Ruthia magnifica subsp. Calyptogena magnifica.